We begin with the raw amino-acid sequence, 129 residues long: Gas vesicle protein C (129 aa).

Repeats lie at residues Val19–Phe51, His52–Phe84, and His85–Phe117. Residues Val19–Phe117 form a 3 X 33 AA tandem repeats region.

This sequence belongs to the gas vesicle GvpC family.

It is found in the gas vesicle. In terms of biological role, confers stability, involved in shaping gas vesicles, hollow, gas filled proteinaceous nanostructures. During planktonic growth they allow positioning of the organism at a favorable depth for light or nutrient acquisition. Its function is as follows. Cluster expression in E.coli (gvpA1-gvpA2-gvpC-gvpN-gvpJ-gvpK-gvpF-gvpG-gvpV-gvpW) allows cells to float and produces irregularly shaped gas vesicles. This Nostoc sp. (strain PCC 7120 / SAG 25.82 / UTEX 2576) protein is Gas vesicle protein C.